We begin with the raw amino-acid sequence, 377 residues long: Succinyl-diaminopimelate desuccinylase (377 aa).

A Zn(2+)-binding site is contributed by histidine 68. Residue aspartate 70 is part of the active site. Residue aspartate 101 participates in Zn(2+) binding. The Proton acceptor role is filled by glutamate 135. Zn(2+) is bound by residues glutamate 136, glutamate 164, and histidine 350.

Belongs to the peptidase M20A family. DapE subfamily. Homodimer. Zn(2+) is required as a cofactor. Co(2+) serves as cofactor.

The catalysed reaction is N-succinyl-(2S,6S)-2,6-diaminopimelate + H2O = (2S,6S)-2,6-diaminopimelate + succinate. The protein operates within amino-acid biosynthesis; L-lysine biosynthesis via DAP pathway; LL-2,6-diaminopimelate from (S)-tetrahydrodipicolinate (succinylase route): step 3/3. Its function is as follows. Catalyzes the hydrolysis of N-succinyl-L,L-diaminopimelic acid (SDAP), forming succinate and LL-2,6-diaminopimelate (DAP), an intermediate involved in the bacterial biosynthesis of lysine and meso-diaminopimelic acid, an essential component of bacterial cell walls. This Acinetobacter baumannii (strain AB0057) protein is Succinyl-diaminopimelate desuccinylase.